A 156-amino-acid polypeptide reads, in one-letter code: Cellulose synthase operon protein D (156 aa).

It participates in glycan metabolism; bacterial cellulose biosynthesis. In terms of biological role, may have a major role in the perfection of crystallization, involved either in the pore structure itself or in the organization of the pores within the linear array of terminal synthesizing complexes (TCs). In Komagataeibacter xylinus (Gluconacetobacter xylinus), this protein is Cellulose synthase operon protein D (bcsDI).